A 746-amino-acid polypeptide reads, in one-letter code: NAD(P)H-quinone oxidoreductase subunit 5, chloroplastic (746 aa).

The next 16 membrane-spanning stretches (helical) occupy residues 9–29 (WIIPFIPLPVPILLGVGLLLF), 40–60 (WTFLSIFLLSIVMIFSLYLSI), 89–109 (IDPLTSIMLILITTVGILVLI), 125–145 (FAYMGFFNTSMLGLVTSSNLI), 147–167 (VYFFWELVGMCSYLLIGFWFT), 185–205 (GDFGLLLGILGLYWITGSFEF), 221–241 (VNLLFFTLCAFLLFVGPIAKS), 258–278 (TPISALIHAATMVAAGIFLVA), 280–300 (LLPIFIVIPSIMYIISLIGII), 327–347 (LGYMMLALGMGSYRAALFHLI), 354–374 (ALLFLGSGSIIHSMEAIVGYS), 396–416 (TAFLVGTLSLCGIPPLACFWS), 425–445 (FLFSPIFAIIACSTAGLTAFY), 547–567 (ILFPMLLLLLFTLFVGAIGIP), 608–628 (FSVSIALFGIFIAYCLYKPFY), and 723–743 (YLFLYLSYVLIFLTILFFFYF).

This sequence belongs to the complex I subunit 5 family. NDH is composed of at least 16 different subunits, 5 of which are encoded in the nucleus.

The protein localises to the plastid. The protein resides in the chloroplast thylakoid membrane. The catalysed reaction is a plastoquinone + NADH + (n+1) H(+)(in) = a plastoquinol + NAD(+) + n H(+)(out). It catalyses the reaction a plastoquinone + NADPH + (n+1) H(+)(in) = a plastoquinol + NADP(+) + n H(+)(out). Functionally, NDH shuttles electrons from NAD(P)H:plastoquinone, via FMN and iron-sulfur (Fe-S) centers, to quinones in the photosynthetic chain and possibly in a chloroplast respiratory chain. The immediate electron acceptor for the enzyme in this species is believed to be plastoquinone. Couples the redox reaction to proton translocation, and thus conserves the redox energy in a proton gradient. This is NAD(P)H-quinone oxidoreductase subunit 5, chloroplastic (ndhF) from Lobularia maritima (Sweet alyssum).